The primary structure comprises 110 residues: Large ribosomal subunit protein uL22 (110 aa).

The protein belongs to the universal ribosomal protein uL22 family. In terms of assembly, part of the 50S ribosomal subunit.

In terms of biological role, this protein binds specifically to 23S rRNA; its binding is stimulated by other ribosomal proteins, e.g. L4, L17, and L20. It is important during the early stages of 50S assembly. It makes multiple contacts with different domains of the 23S rRNA in the assembled 50S subunit and ribosome. The globular domain of the protein is located near the polypeptide exit tunnel on the outside of the subunit, while an extended beta-hairpin is found that lines the wall of the exit tunnel in the center of the 70S ribosome. In Aggregatibacter actinomycetemcomitans (Actinobacillus actinomycetemcomitans), this protein is Large ribosomal subunit protein uL22.